A 131-amino-acid polypeptide reads, in one-letter code: Holo-[acyl-carrier-protein] synthase (131 aa).

Mg(2+)-binding residues include Asp8 and Glu59.

Belongs to the P-Pant transferase superfamily. AcpS family. Mg(2+) serves as cofactor.

The protein localises to the cytoplasm. The catalysed reaction is apo-[ACP] + CoA = holo-[ACP] + adenosine 3',5'-bisphosphate + H(+). Its function is as follows. Transfers the 4'-phosphopantetheine moiety from coenzyme A to a Ser of acyl-carrier-protein. The sequence is that of Holo-[acyl-carrier-protein] synthase from Rickettsia rickettsii (strain Iowa).